The following is a 25-amino-acid chain: MFSLSNSQYTCQDYISDHIWKTSSH.

The protein belongs to the arginine attenuator peptide family.

Arginine attenuator peptide (AAP) that has a regulatory role in the production of arginine-specific carbamoyl phosphate synthetase. Encoded by an upstream open reading frame (uORF) within the 5'-leader region of arginine-specific carbamoyl phosphate synthetase small chain (CPA1) mRNA, it attenuates the translation of the downstream CPA1 ORF. In the presence of high concentrations of arginine, ribosomes translating the uORF encoding AAP stall at the termination codon, resulting in reduced translation from the downstream CPA1 initiation codon. This Saccharomyces cerevisiae (strain ATCC 204508 / S288c) (Baker's yeast) protein is Arginine attenuator peptide.